The following is a 166-amino-acid chain: uncharacterized protein (166 aa).

This is an uncharacterized protein from Invertebrate iridescent virus 6 (IIV-6).